The following is a 186-amino-acid chain: Ribosome-recycling factor (186 aa).

The interval 135 to 156 is disordered; the sequence is DANDEVKKLQKDKAVSEDEGKK.

It belongs to the RRF family.

The protein resides in the cytoplasm. Responsible for the release of ribosomes from messenger RNA at the termination of protein biosynthesis. May increase the efficiency of translation by recycling ribosomes from one round of translation to another. This chain is Ribosome-recycling factor, found in Bdellovibrio bacteriovorus (strain ATCC 15356 / DSM 50701 / NCIMB 9529 / HD100).